Here is a 252-residue protein sequence, read N- to C-terminus: Mitochondrial peculiar membrane protein 1 (252 aa).

The segment at 230–252 (TTTTSKGSSPQVKHKVVSVDEDN) is disordered.

The protein resides in the mitochondrion membrane. The polypeptide is Mitochondrial peculiar membrane protein 1 (MPM1) (Saccharomyces cerevisiae (strain ATCC 204508 / S288c) (Baker's yeast)).